We begin with the raw amino-acid sequence, 617 residues long: MAGAPGPEIREKFQAALALSRVELHKNPEKEPYKSKYGARALLEEVRALLGPAPEDDDERAADDGPVDQALGAGEPRDAEGPGAQRALRLAVVEFHLGVNHIDTEELSAGEEHLVRCLSLLRPYRLSLGCVSLFIQAQNNLGILWSEREEIETARTYLESSEALYNQYMKEIGSPPLDPTEHFLPEEEKLTEQERSKRFEKVYTHNLYYLAQVYQHMEMFEKAAHYCHSTLKRQLEHNAYHPMEWAINAATLSQFYINKLCFMEARHCLSAANVIFGQTGKITATEDTPEVEGDMPELYHQRKGEIARCWIKYCLTLMQNAQLSMQDNIGELDLDKQSELRALRRKELDEEESVRKRAVQFGTGELRDAISAVEEKVRYLRPLDFEEARELFLLGQHYVYEAKEFFQIDGYVTDHIEVVQDHSALFKVLAFFEADMERRCKMHKRRIAMLEPLIVDLNPQYYQLVNRQIQFEIAHAYYDMMDLKVAIADKLREPDSHTVKKINSLNQSALKYYQLFLDSLRDPNKVFPEHIGEDVLRPAMLAKFRVARLYGKIITADPKKELENLATSLEHYKFIVDYCETHPEAAQEIEVELELSKEMVSLLPTKMERFRAKMALT.

The tract at residues 48 to 83 (ALLGPAPEDDDERAADDGPVDQALGAGEPRDAEGPG) is disordered. Serine 174 carries the post-translational modification Phosphoserine.

It belongs to the KIF-binding protein family. Interacts with KIF1B; positively regulates KIF1B microtubule motor activity. Interacts with STMN2.

Its subcellular location is the cytoplasm. The protein localises to the cytoskeleton. In terms of biological role, activator of KIF1B plus-end-directed microtubule motor activity. Required for organization of axonal microtubules, and axonal outgrowth and maintenance during peripheral and central nervous system development. The sequence is that of KIF-binding protein (Kifbp) from Rattus norvegicus (Rat).